A 256-amino-acid chain; its full sequence is uncharacterized protein (256 aa).

The next 6 membrane-spanning stretches (helical) occupy residues 6-26, 29-49, 61-81, 145-165, 175-195, and 218-238; these read TSFITQSLVYSLLVVGIVSFL, LALVGLLLPGIILMTTLGTFI, ISGTTGCLLGDWISYYIGLYF, IIGCILWPPVYFFPGIVTGIA, YYFKWLLLLISILIWLGIWLI, and IGWLAILTMSSGILSLIAIQF.

The protein belongs to the DedA family.

It is found in the cell membrane. This is an uncharacterized protein from Buchnera aphidicola subsp. Acyrthosiphon pisum (strain APS) (Acyrthosiphon pisum symbiotic bacterium).